A 230-amino-acid polypeptide reads, in one-letter code: Cytidylate kinase (230 aa).

ATP is bound at residue 16-24 (GPASAGKST).

Belongs to the cytidylate kinase family. Type 1 subfamily.

The protein localises to the cytoplasm. The enzyme catalyses CMP + ATP = CDP + ADP. The catalysed reaction is dCMP + ATP = dCDP + ADP. The polypeptide is Cytidylate kinase (Lactobacillus johnsonii (strain CNCM I-12250 / La1 / NCC 533)).